The chain runs to 460 residues: Cysteine--tRNA ligase (460 aa).

C28 is a binding site for Zn(2+). The 'HIGH' region motif lies at 30–40; it reads MTVYDYCHLGH. Residues C209, H234, and E238 each coordinate Zn(2+). Positions 266–270 match the 'KMSKS' region motif; sequence KMSKS. K269 is a binding site for ATP.

The protein belongs to the class-I aminoacyl-tRNA synthetase family. Monomer. It depends on Zn(2+) as a cofactor.

It localises to the cytoplasm. The catalysed reaction is tRNA(Cys) + L-cysteine + ATP = L-cysteinyl-tRNA(Cys) + AMP + diphosphate. This chain is Cysteine--tRNA ligase, found in Pseudomonas paraeruginosa (strain DSM 24068 / PA7) (Pseudomonas aeruginosa (strain PA7)).